The following is a 209-amino-acid chain: Large ribosomal subunit protein uL3 (209 aa).

Residues 132–153 (ATHGNSLSHRVPGSIGQNQTPG) are disordered. N5-methylglutamine is present on glutamine 150.

Belongs to the universal ribosomal protein uL3 family. In terms of assembly, part of the 50S ribosomal subunit. Forms a cluster with proteins L14 and L19. In terms of processing, methylated by PrmB.

In terms of biological role, one of the primary rRNA binding proteins, it binds directly near the 3'-end of the 23S rRNA, where it nucleates assembly of the 50S subunit. The sequence is that of Large ribosomal subunit protein uL3 from Enterobacter sp. (strain 638).